The following is a 100-amino-acid chain: Cell division topological specificity factor (100 aa).

Belongs to the MinE family.

Its function is as follows. Prevents the cell division inhibition by proteins MinC and MinD at internal division sites while permitting inhibition at polar sites. This ensures cell division at the proper site by restricting the formation of a division septum at the midpoint of the long axis of the cell. The sequence is that of Cell division topological specificity factor from Blochmanniella floridana.